The chain runs to 83 residues: Protein YciN (83 aa).

This is Protein YciN (yciN) from Escherichia coli O157:H7.